Consider the following 334-residue polypeptide: Protein RecA (334 aa).

65-72 (GNESSGKT) is an ATP binding site.

This sequence belongs to the RecA family.

It is found in the cytoplasm. Can catalyze the hydrolysis of ATP in the presence of single-stranded DNA, the ATP-dependent uptake of single-stranded DNA by duplex DNA, and the ATP-dependent hybridization of homologous single-stranded DNAs. It interacts with LexA causing its activation and leading to its autocatalytic cleavage. In Ureaplasma parvum serovar 3 (strain ATCC 27815 / 27 / NCTC 11736), this protein is Protein RecA.